A 190-amino-acid polypeptide reads, in one-letter code: Putative manganese efflux pump MntP (190 aa).

A run of 6 helical transmembrane segments spans residues 3–23 (PISLLFLALAMSTDAFAAALG), 41–61 (LIFGAIETITPVIGWGIGQVA), 69–89 (DHWIAFTLLLVLGLHMIYNGL), 105–125 (FWILAVTAFATSIDALAVGVG), 133–153 (IMVAALAIGLATTVMVTIGVM), and 168–188 (IVGGIVLIVVGTTILYEHLTA).

This sequence belongs to the MntP (TC 9.B.29) family.

Its subcellular location is the cell inner membrane. In terms of biological role, probably functions as a manganese efflux pump. The protein is Putative manganese efflux pump MntP of Pseudomonas syringae pv. tomato (strain ATCC BAA-871 / DC3000).